We begin with the raw amino-acid sequence, 102 residues long: Small ribosomal subunit protein uS10 (102 aa).

Belongs to the universal ribosomal protein uS10 family. As to quaternary structure, part of the 30S ribosomal subunit.

Its function is as follows. Involved in the binding of tRNA to the ribosomes. This chain is Small ribosomal subunit protein uS10, found in Methanosphaerula palustris (strain ATCC BAA-1556 / DSM 19958 / E1-9c).